A 229-amino-acid polypeptide reads, in one-letter code: Orotidine 5'-phosphate decarboxylase (229 aa).

Residues Asp10, Lys32, 59–68, Thr119, Arg180, Gln189, Gly209, and Arg210 contribute to the substrate site; that span reads DLKFHDIPNT. Catalysis depends on Lys61, which acts as the Proton donor.

Belongs to the OMP decarboxylase family. Type 1 subfamily. As to quaternary structure, homodimer.

It carries out the reaction orotidine 5'-phosphate + H(+) = UMP + CO2. It functions in the pathway pyrimidine metabolism; UMP biosynthesis via de novo pathway; UMP from orotate: step 2/2. Its function is as follows. Catalyzes the decarboxylation of orotidine 5'-monophosphate (OMP) to uridine 5'-monophosphate (UMP). The polypeptide is Orotidine 5'-phosphate decarboxylase (Legionella pneumophila (strain Lens)).